The following is a 315-amino-acid chain: Homoserine kinase (315 aa).

97–107 (PPARGLGSSAT) provides a ligand contact to ATP.

It belongs to the GHMP kinase family. Homoserine kinase subfamily.

The protein localises to the cytoplasm. The catalysed reaction is L-homoserine + ATP = O-phospho-L-homoserine + ADP + H(+). It functions in the pathway amino-acid biosynthesis; L-threonine biosynthesis; L-threonine from L-aspartate: step 4/5. In terms of biological role, catalyzes the ATP-dependent phosphorylation of L-homoserine to L-homoserine phosphate. The polypeptide is Homoserine kinase (Prochlorococcus marinus (strain MIT 9515)).